Consider the following 680-residue polypeptide: MIDRYKHQQLRIGSVSPQQISAWATKILPNGEIVGEVTKPYTFHYKTNKPEKMDYFVKNFGPIKSGICACGNYRVIGDEKEDPKFCEQCGVEFVDSRIRRYQMGYIKLACPVTHVWYLKRLPSYIANLLDKPLKELEGLVYCDFSFARPITKKPTFLRLRGLFEYEIQSWKYSIPLFFTTQGFDTFRNREISTGAGAIREQLADLDLRIIIENSLVEWEELGEEGHTGNEWEDRKVGRRKDFLVRRVELAKHFIRTNIEPEWMVLCLLPVLPPELRPIIQIDGGKLMSSDINELYRRVIYRNNTLTDLLTTSRSTPGELVMCQEKLVQEAVDTLLDNGIRGQPMRDGHNKVYKSFSDVIEGKEGRFRETLLGKRVDYSGRSVIVVGPSLSLHRCGLPREIAIELFQTFVIRGLIRQHLASNIGVAKSKIREKEPIVWEILQEVMQGHPVLLNRAPTLHRLGIQAFQPVLVEGRAICLHPLVCKGFNADFDGDQMAVHVPLSLEAQVEARLLMFSHMNLLSPAIGDPISVPTQDMLIGLYVLTSGNHRGICVNRYNPCNRRNYQNQKRSDNSHYKYTKEPFFSNSYDAIGAYRQKRINLDSPLWLRWRLDQRVIASRETPIEVHYESLGTFYEIYGHYLIVRSLKKQILFIYIRTTVGHIALYREIEEAIQGFSRAYSSGT.

Residues cysteine 68, cysteine 70, cysteine 86, and cysteine 89 each contribute to the Zn(2+) site. Mg(2+) is bound by residues aspartate 488, aspartate 490, and aspartate 492.

This sequence belongs to the RNA polymerase beta' chain family. RpoC1 subfamily. In terms of assembly, in plastids the minimal PEP RNA polymerase catalytic core is composed of four subunits: alpha, beta, beta', and beta''. When a (nuclear-encoded) sigma factor is associated with the core the holoenzyme is formed, which can initiate transcription. Requires Mg(2+) as cofactor. It depends on Zn(2+) as a cofactor.

It localises to the plastid. Its subcellular location is the chloroplast. The catalysed reaction is RNA(n) + a ribonucleoside 5'-triphosphate = RNA(n+1) + diphosphate. In terms of biological role, DNA-dependent RNA polymerase catalyzes the transcription of DNA into RNA using the four ribonucleoside triphosphates as substrates. The protein is DNA-directed RNA polymerase subunit beta' of Nicotiana tabacum (Common tobacco).